The sequence spans 696 residues: Glutamate-rich protein 6B (696 aa).

Residues 1–10 (MSAENNQLSG) show a composition bias toward polar residues. Residues 1-105 (MSAENNQLSG…EYLEKAGYLE (105 aa)) are disordered. Composition is skewed to acidic residues over residues 32–44 (EDTEVELDEESLQ) and 54–72 (ESLEDKEYLEEEEDLEEEE). Positions 73-91 (YLGKEEYLKEEEYLGKEEH) are enriched in basic and acidic residues.

This sequence belongs to the ERICH6 family.

The sequence is that of Glutamate-rich protein 6B (ERICH6B) from Homo sapiens (Human).